Reading from the N-terminus, the 113-residue chain is Ribonuclease P protein component (113 aa).

This sequence belongs to the RnpA family. Consists of a catalytic RNA component (M1 or rnpB) and a protein subunit.

The enzyme catalyses Endonucleolytic cleavage of RNA, removing 5'-extranucleotides from tRNA precursor.. In terms of biological role, RNaseP catalyzes the removal of the 5'-leader sequence from pre-tRNA to produce the mature 5'-terminus. It can also cleave other RNA substrates such as 4.5S RNA. The protein component plays an auxiliary but essential role in vivo by binding to the 5'-leader sequence and broadening the substrate specificity of the ribozyme. This chain is Ribonuclease P protein component, found in Desulforamulus reducens (strain ATCC BAA-1160 / DSM 100696 / MI-1) (Desulfotomaculum reducens).